A 142-amino-acid polypeptide reads, in one-letter code: Large ribosomal subunit protein uL13 (142 aa).

The protein belongs to the universal ribosomal protein uL13 family. In terms of assembly, part of the 50S ribosomal subunit.

In terms of biological role, this protein is one of the early assembly proteins of the 50S ribosomal subunit, although it is not seen to bind rRNA by itself. It is important during the early stages of 50S assembly. This is Large ribosomal subunit protein uL13 from Histophilus somni (strain 2336) (Haemophilus somnus).